The following is a 344-amino-acid chain: Holliday junction branch migration complex subunit RuvB (344 aa).

The segment at 4–184 (QDRIIDANAK…FGIVQRLEFY (181 aa)) is large ATPase domain (RuvB-L). ATP-binding positions include R24, G65, K68, T69, T70, 131–133 (EDF), R174, Y184, and R221. Position 69 (T69) interacts with Mg(2+). The interval 185–255 (NIEDLTHIVE…IADLALNMLN (71 aa)) is small ATPAse domain (RuvB-S). The tract at residues 258-344 (EHGFDHMDRR…ALKQDSLPGI (87 aa)) is head domain (RuvB-H). R294, R313, and R318 together coordinate DNA.

This sequence belongs to the RuvB family. As to quaternary structure, homohexamer. Forms an RuvA(8)-RuvB(12)-Holliday junction (HJ) complex. HJ DNA is sandwiched between 2 RuvA tetramers; dsDNA enters through RuvA and exits via RuvB. An RuvB hexamer assembles on each DNA strand where it exits the tetramer. Each RuvB hexamer is contacted by two RuvA subunits (via domain III) on 2 adjacent RuvB subunits; this complex drives branch migration. In the full resolvosome a probable DNA-RuvA(4)-RuvB(12)-RuvC(2) complex forms which resolves the HJ.

The protein resides in the cytoplasm. It catalyses the reaction ATP + H2O = ADP + phosphate + H(+). In terms of biological role, the RuvA-RuvB-RuvC complex processes Holliday junction (HJ) DNA during genetic recombination and DNA repair, while the RuvA-RuvB complex plays an important role in the rescue of blocked DNA replication forks via replication fork reversal (RFR). RuvA specifically binds to HJ cruciform DNA, conferring on it an open structure. The RuvB hexamer acts as an ATP-dependent pump, pulling dsDNA into and through the RuvAB complex. RuvB forms 2 homohexamers on either side of HJ DNA bound by 1 or 2 RuvA tetramers; 4 subunits per hexamer contact DNA at a time. Coordinated motions by a converter formed by DNA-disengaged RuvB subunits stimulates ATP hydrolysis and nucleotide exchange. Immobilization of the converter enables RuvB to convert the ATP-contained energy into a lever motion, pulling 2 nucleotides of DNA out of the RuvA tetramer per ATP hydrolyzed, thus driving DNA branch migration. The RuvB motors rotate together with the DNA substrate, which together with the progressing nucleotide cycle form the mechanistic basis for DNA recombination by continuous HJ branch migration. Branch migration allows RuvC to scan DNA until it finds its consensus sequence, where it cleaves and resolves cruciform DNA. In Saccharophagus degradans (strain 2-40 / ATCC 43961 / DSM 17024), this protein is Holliday junction branch migration complex subunit RuvB.